Here is a 213-residue protein sequence, read N- to C-terminus: Adenylate kinase (213 aa).

10-15 (GAGKGT) is an ATP binding site. Residues 30 to 59 (STGDIFRANIKNNTELGQKAKTYMDKGELV) are NMP. AMP is bound by residues Thr31, Arg36, 57–59 (ELV), 85–88 (GFPR), and Gln92. The LID stretch occupies residues 126–163 (GRRACVGCGATYHIQFNPTKVEGICDACGEKLILRDDD). Arg127 provides a ligand contact to ATP. 2 residues coordinate Zn(2+): Cys130 and Cys133. Residue 136–137 (TY) coordinates ATP. Zn(2+)-binding residues include Cys150 and Cys153. Residues Arg160 and Arg171 each contribute to the AMP site. Gln199 contributes to the ATP binding site.

This sequence belongs to the adenylate kinase family. As to quaternary structure, monomer.

Its subcellular location is the cytoplasm. It carries out the reaction AMP + ATP = 2 ADP. The protein operates within purine metabolism; AMP biosynthesis via salvage pathway; AMP from ADP: step 1/1. Functionally, catalyzes the reversible transfer of the terminal phosphate group between ATP and AMP. Plays an important role in cellular energy homeostasis and in adenine nucleotide metabolism. The protein is Adenylate kinase of Lachnospira eligens (strain ATCC 27750 / DSM 3376 / VPI C15-48 / C15-B4) (Eubacterium eligens).